A 180-amino-acid chain; its full sequence is Regulator of G-protein signaling 8 (180 aa).

Ser-26 carries the post-translational modification Phosphoserine. One can recognise an RGS domain in the interval 56 to 171 (SFDVLLSHKY…FLRSKMYLDL (116 aa)).

In terms of assembly, interacts with GNAO1 and GNAI3. In terms of tissue distribution, expressed at high levels in brain. Very little expression detected in other tissues. Detected in Purkinje cells in the cerebellum.

The protein localises to the cell membrane. The protein resides in the membrane. It localises to the perikaryon. It is found in the cell projection. Its subcellular location is the dendrite. The protein localises to the nucleus. Its function is as follows. Regulates G protein-coupled receptor signaling cascades, including signaling via muscarinic acetylcholine receptor CHRM2 and dopamine receptor DRD2. Inhibits signal transduction by increasing the GTPase activity of G protein alpha subunits, thereby driving them into their inactive GDP-bound form. Modulates the activity of potassium channels that are activated in response to DRD2 and CHRM2 signaling. The protein is Regulator of G-protein signaling 8 (Rgs8) of Rattus norvegicus (Rat).